A 363-amino-acid polypeptide reads, in one-letter code: UDP-3-O-acylglucosamine N-acyltransferase (363 aa).

The active-site Proton acceptor is His266.

It belongs to the transferase hexapeptide repeat family. LpxD subfamily. Homotrimer.

It catalyses the reaction a UDP-3-O-[(3R)-3-hydroxyacyl]-alpha-D-glucosamine + a (3R)-hydroxyacyl-[ACP] = a UDP-2-N,3-O-bis[(3R)-3-hydroxyacyl]-alpha-D-glucosamine + holo-[ACP] + H(+). It functions in the pathway bacterial outer membrane biogenesis; LPS lipid A biosynthesis. Functionally, catalyzes the N-acylation of UDP-3-O-acylglucosamine using 3-hydroxyacyl-ACP as the acyl donor. Is involved in the biosynthesis of lipid A, a phosphorylated glycolipid that anchors the lipopolysaccharide to the outer membrane of the cell. The chain is UDP-3-O-acylglucosamine N-acyltransferase from Bordetella parapertussis (strain 12822 / ATCC BAA-587 / NCTC 13253).